An 879-amino-acid polypeptide reads, in one-letter code: Protein P (879 aa).

Residues 1 to 184 (MHPFSRLFRN…GKPYSWEHRQ (184 aa)) form a terminal protein domain (TP) region. The interval 185-382 (LVQHNGQQHK…YCIHHIVSSI (198 aa)) is spacer. Positions 304–345 (SASNSNKSRSREKAYSSNSTSKRYSPPLNYEKSDFSSPGVRG) are disordered. The interval 383 to 724 (DDWGPCTVTG…YEELWPVVRQ (342 aa)) is polymerase/reverse transcriptase domain (RT). One can recognise a Reverse transcriptase domain in the interval 393-634 (DVTIKSPRTP…NHLHFMGYVI (242 aa)). Mg(2+) contacts are provided by Asp-465, Asp-585, and Asp-586.

This sequence belongs to the hepadnaviridae P protein family.

The enzyme catalyses DNA(n) + a 2'-deoxyribonucleoside 5'-triphosphate = DNA(n+1) + diphosphate. It catalyses the reaction Endonucleolytic cleavage to 5'-phosphomonoester.. With respect to regulation, activated by host HSP70 and HSP40 in vitro to be able to bind the epsilon loop of the pgRNA. Because deletion of the RNase H region renders the protein partly chaperone-independent, the chaperones may be needed indirectly to relieve occlusion of the RNA-binding site by this domain. Inhibited by several reverse-transcriptase inhibitors: Lamivudine, Adefovir and Entecavir. Its function is as follows. Multifunctional enzyme that converts the viral RNA genome into dsDNA in viral cytoplasmic capsids. This enzyme displays a DNA polymerase activity that can copy either DNA or RNA templates, and a ribonuclease H (RNase H) activity that cleaves the RNA strand of RNA-DNA heteroduplexes in a partially processive 3'- to 5'-endonucleasic mode. Neo-synthesized pregenomic RNA (pgRNA) are encapsidated together with the P protein, and reverse-transcribed inside the nucleocapsid. Initiation of reverse-transcription occurs first by binding the epsilon loop on the pgRNA genome, and is initiated by protein priming, thereby the 5'-end of (-)DNA is covalently linked to P protein. Partial (+)DNA is synthesized from the (-)DNA template and generates the relaxed circular DNA (RC-DNA) genome. After budding and infection, the RC-DNA migrates in the nucleus, and is converted into a plasmid-like covalently closed circular DNA (cccDNA). The activity of P protein does not seem to be necessary for cccDNA generation, and is presumably released from (+)DNA by host nuclear DNA repair machinery. This is Protein P from Woodchuck hepatitis B virus (isolate 1) (WHV).